The chain runs to 154 residues: 6,7-dimethyl-8-ribityllumazine synthase (154 aa).

5-amino-6-(D-ribitylamino)uracil-binding positions include phenylalanine 22, 57–59 (AYE), and 81–83 (AVI). Residue 86–87 (GT) coordinates (2S)-2-hydroxy-3-oxobutyl phosphate. Catalysis depends on histidine 89, which acts as the Proton donor. Residue phenylalanine 114 coordinates 5-amino-6-(D-ribitylamino)uracil. Arginine 128 serves as a coordination point for (2S)-2-hydroxy-3-oxobutyl phosphate.

Belongs to the DMRL synthase family. Forms an icosahedral capsid composed of 60 subunits, arranged as a dodecamer of pentamers.

The enzyme catalyses (2S)-2-hydroxy-3-oxobutyl phosphate + 5-amino-6-(D-ribitylamino)uracil = 6,7-dimethyl-8-(1-D-ribityl)lumazine + phosphate + 2 H2O + H(+). Its pathway is cofactor biosynthesis; riboflavin biosynthesis; riboflavin from 2-hydroxy-3-oxobutyl phosphate and 5-amino-6-(D-ribitylamino)uracil: step 1/2. Functionally, catalyzes the formation of 6,7-dimethyl-8-ribityllumazine by condensation of 5-amino-6-(D-ribitylamino)uracil with 3,4-dihydroxy-2-butanone 4-phosphate. This is the penultimate step in the biosynthesis of riboflavin. The sequence is that of 6,7-dimethyl-8-ribityllumazine synthase from Idiomarina loihiensis (strain ATCC BAA-735 / DSM 15497 / L2-TR).